A 131-amino-acid polypeptide reads, in one-letter code: MSMSDPIADMLTRIRNGQMVEKVSVSMPSSKVKVAIAQVLKDEGYIDDFAVKAEGAKSELNIALKYYAGRPVIERIERVSKPGLRVYRGRNDIPQVMNGLGVAIVSTPKGVMTDRKARATGVGGEVICYVA.

It belongs to the universal ribosomal protein uS8 family. Part of the 30S ribosomal subunit. Contacts proteins S5 and S12.

One of the primary rRNA binding proteins, it binds directly to 16S rRNA central domain where it helps coordinate assembly of the platform of the 30S subunit. This Burkholderia lata (strain ATCC 17760 / DSM 23089 / LMG 22485 / NCIMB 9086 / R18194 / 383) protein is Small ribosomal subunit protein uS8.